A 235-amino-acid polypeptide reads, in one-letter code: Endonuclease V (235 aa).

Positions 47 and 117 each coordinate Mg(2+).

Belongs to the endonuclease V family. It depends on Mg(2+) as a cofactor.

Its subcellular location is the cytoplasm. It catalyses the reaction Endonucleolytic cleavage at apurinic or apyrimidinic sites to products with a 5'-phosphate.. Its function is as follows. DNA repair enzyme involved in the repair of deaminated bases. Selectively cleaves double-stranded DNA at the second phosphodiester bond 3' to a deoxyinosine leaving behind the intact lesion on the nicked DNA. The sequence is that of Endonuclease V from Protochlamydia amoebophila (strain UWE25).